Consider the following 250-residue polypeptide: Probable transcriptional regulatory protein Cpha266_0538 (250 aa).

This sequence belongs to the TACO1 family.

The protein localises to the cytoplasm. The sequence is that of Probable transcriptional regulatory protein Cpha266_0538 from Chlorobium phaeobacteroides (strain DSM 266 / SMG 266 / 2430).